The chain runs to 315 residues: Methionyl-tRNA formyltransferase (315 aa).

111 to 114 lines the (6S)-5,6,7,8-tetrahydrofolate pocket; it reads SLLP.

The protein belongs to the Fmt family.

It catalyses the reaction L-methionyl-tRNA(fMet) + (6R)-10-formyltetrahydrofolate = N-formyl-L-methionyl-tRNA(fMet) + (6S)-5,6,7,8-tetrahydrofolate + H(+). Its function is as follows. Attaches a formyl group to the free amino group of methionyl-tRNA(fMet). The formyl group appears to play a dual role in the initiator identity of N-formylmethionyl-tRNA by promoting its recognition by IF2 and preventing the misappropriation of this tRNA by the elongation apparatus. This chain is Methionyl-tRNA formyltransferase, found in Chlorobium phaeobacteroides (strain DSM 266 / SMG 266 / 2430).